Here is a 565-residue protein sequence, read N- to C-terminus: Berberine bridge enzyme-like C-2 (565 aa).

The first 17 residues, 1 to 17 (MFPIIILISFSFTFLFA), serve as a signal peptide directing secretion. 2 N-linked (GlcNAc...) asparagine glycosylation sites follow: Asn-28 and Asn-40. Cysteines 32 and 94 form a disulfide. The region spanning 72–248 (YMPKPTVIIL…YAWKIRLLKV (177 aa)) is the FAD-binding PCMH-type domain. The residue at position 109 (His-109) is a Pros-8alpha-FAD histidine. N-linked (GlcNAc...) asparagine glycans are attached at residues Asn-363 and Asn-502.

It belongs to the oxygen-dependent FAD-linked oxidoreductase family. Requires FAD as cofactor.

It localises to the vacuole. Its pathway is alkaloid biosynthesis; nicotine biosynthesis. In terms of biological role, involved in the biosynthesis of pyridine alkaloid natural products, leading mainly to the production of anabasine, anatabine, nicotine and nornicotine, effective deterrents against herbivores with antiparasitic and pesticide properties (neurotoxins); nornicotine serves as the precursor in the synthesis of the carcinogen compound N'-nitrosonornicotine (NNN). Catalyzes a late oxidation step subsequent to the pyridine ring condensation reaction in the biosynthesis of alkaloids. The polypeptide is Berberine bridge enzyme-like C-2 (Nicotiana tabacum (Common tobacco)).